We begin with the raw amino-acid sequence, 1135 residues long: DNA-directed RNA polymerase I subunit RPA2 (1135 aa).

Residues 1 to 24 form a disordered region; it reads MDPGSRWRNLPSGPSLKHLTDPSY. R180 serves as a coordination point for RNA. Positions 194 to 208 are loop B; the sequence is IRPKWKTRGPGYTQY. The segment at 236–247 is loop A; sequence LNFIYRKELFFL. D367 contributes to the RNA binding site. Fork loop regions lie at residues 439–453 and 474–489; these read LRSK…DSGL and RGAD…VRRL. Residue D755 coordinates Mg(2+). K890 is a binding site for RNA. DNA contacts are provided by R1020 and R1036. S1051 is subject to Phosphoserine. Zn(2+) contacts are provided by C1070, C1073, C1098, and C1101. The segment at 1070 to 1101 adopts a C4-type zinc-finger fold; sequence CVKCGSLLSPLLEKPPPSWSAMRNRKYNCTLC.

This sequence belongs to the RNA polymerase beta chain family. Component of the RNA polymerase I (Pol I) complex consisting of 13 subunits: a ten-subunit catalytic core composed of POLR1A/RPA1, POLR1B/RPA2, POLR1C/RPAC1, POLR1D/RPAC2, POLR1H/RPA12, POLR2E/RPABC1, POLR2F/RPABC2, POLR2H/RPABC3, POLR2K/RPABC4 and POLR2L/RPABC5; a mobile stalk subunit POLR1F/RPA43 protruding from the core and additional subunits homologous to general transcription factors POLR1E/RPA49 and POLR1G/RPA34. Part of Pol I pre-initiation complex (PIC), in which Pol I core assembles with RRN3 and promoter-bound UTBF and SL1/TIF-IB complex. Mg(2+) is required as a cofactor.

Its subcellular location is the nucleus. The protein localises to the nucleolus. The protein resides in the chromosome. It carries out the reaction RNA(n) + a ribonucleoside 5'-triphosphate = RNA(n+1) + diphosphate. Catalytic core component of RNA polymerase I (Pol I), a DNA-dependent RNA polymerase which synthesizes ribosomal RNA precursors using the four ribonucleoside triphosphates as substrates. Transcribes 47S pre-rRNAs from multicopy rRNA gene clusters, giving rise to 5.8S, 18S and 28S ribosomal RNAs. Pol I-mediated transcription cycle proceeds through transcription initiation, transcription elongation and transcription termination stages. During transcription initiation, Pol I pre-initiation complex (PIC) is recruited by the selectivity factor 1 (SL1/TIF-IB) complex bound to the core promoter that precedes an rDNA repeat unit. The PIC assembly bends the promoter favoring the formation of the transcription bubble and promoter escape. Once the polymerase has escaped from the promoter it enters the elongation phase during which RNA is actively polymerized, based on complementarity with the template DNA strand. Highly processive, assembles in structures referred to as 'Miller trees' where many elongating Pol I complexes queue and transcribe the same rDNA coding regions. At terminator sequences downstream of the rDNA gene, PTRF interacts with Pol I and halts Pol I transcription leading to the release of the RNA transcript and polymerase from the DNA. Forms Pol I active center together with the largest subunit POLR1A/RPA1. Appends one nucleotide at a time to the 3' end of the nascent RNA, with POLR1A/RPA1 contributing a Mg(2+)-coordinating DxDGD motif, and POLR1B/RPA2 participating in the coordination of a second Mg(2+) ion and providing lysine residues believed to facilitate Watson-Crick base pairing between the incoming nucleotide and the template base. Typically, Mg(2+) ions direct a 5' nucleoside triphosphate to form a phosphodiester bond with the 3' hydroxyl of the preceding nucleotide of the nascent RNA, with the elimination of pyrophosphate. Has proofreading activity: Pauses and backtracks to allow the cleavage of a missincorporated nucleotide via POLR1H/RPA12. High Pol I processivity is associated with decreased transcription fidelity. This is DNA-directed RNA polymerase I subunit RPA2 from Homo sapiens (Human).